The following is a 521-amino-acid chain: Protein DETOXIFICATION 44, chloroplastic (521 aa).

The N-terminal 31 residues, 1 to 31, are a transit peptide targeting the chloroplast; that stretch reads MAAVATSFCFSPHRSPSRFGNPNSSIRRTIV. Residues 12-73 are disordered; the sequence is PHRSPSRFGN…DHDHKPDPGI (62 aa). 2 stretches are compositionally biased toward polar residues: residues 18-27 and 42-61; these read RFGNPNSSIR and AVSTSSQRPEKQQNPLTSQN. Transmembrane regions (helical) follow at residues 80–100, 103–123, 167–187, 213–235, 242–262, 268–288, 314–334, 345–365, 385–405, 423–443, 454–474, and 481–503; these read IMSIALPAALALAADPITSLV, AFVGHIGSAELAAVGVSVSVF, VSTSLVLAAGVGIAEAIALSL, RLRAYGAPPIVVALAAQGAFRGF, LYAVVAGNVLNAVLDPILIFV, SGAAAATVISEYLIAFILLWK, LLIGRTVALLVPFTLATSLAA, QIVLEIWLAVSLLTDALAIAA, LFGVLQVGLATGTGLAAVLFI, IALSGTLFVAGSQPVNALAFV, FGFAAYSMVIVGFISSLFMLV, and LAGIWTGLFLFMALRLVAGAWRL.

The protein belongs to the multi antimicrobial extrusion (MATE) (TC 2.A.66.1) family. In terms of tissue distribution, expressed in shoots.

The protein localises to the plastid. It localises to the chloroplast membrane. This Arabidopsis thaliana (Mouse-ear cress) protein is Protein DETOXIFICATION 44, chloroplastic.